The chain runs to 117 residues: uncharacterized protein (117 aa).

The span at 1 to 12 (MAQNSVSLSAGD) shows a compositional bias: polar residues. Disordered regions lie at residues 1–30 (MAQN…NPSA) and 43–87 (VTRL…SPYP).

This is an uncharacterized protein from Mus musculus (Mouse).